A 313-amino-acid polypeptide reads, in one-letter code: D-apiose import binding protein (313 aa).

The first 26 residues, 1-26 (MKLTRRLTLAAFASALALGTAMPAFA), serve as a signal peptide directing secretion. D-apiofuranose-binding positions include Asn39, 115–116 (DR), 162–164 (DTN), Arg168, Asn218, Asp243, and Gln263.

This sequence belongs to the bacterial solute-binding protein 2 family.

The protein resides in the periplasm. Its function is as follows. Part of an ABC transporter complex involved in D-apiose import. Binds D-apiose, D-ribose and D-ribulose. The chain is D-apiose import binding protein from Rhizobium etli (strain ATCC 51251 / DSM 11541 / JCM 21823 / NBRC 15573 / CFN 42).